Consider the following 806-residue polypeptide: Leucine--tRNA ligase (806 aa).

Residues Pro-40–His-51 carry the 'HIGH' region motif. The short motif at Lys-576–Ser-580 is the 'KMSKS' region element. Lys-579 contacts ATP.

The protein belongs to the class-I aminoacyl-tRNA synthetase family.

It is found in the cytoplasm. The catalysed reaction is tRNA(Leu) + L-leucine + ATP = L-leucyl-tRNA(Leu) + AMP + diphosphate. In Prosthecochloris aestuarii (strain DSM 271 / SK 413), this protein is Leucine--tRNA ligase.